Reading from the N-terminus, the 400-residue chain is Acetate kinase (400 aa).

Asn8 is a Mg(2+) binding site. Lys15 provides a ligand contact to ATP. Arg89 is a substrate binding site. The Proton donor/acceptor role is filled by Asp146. ATP contacts are provided by residues 206–210 (HVGNG), 283–285 (DMR), and 331–335 (GMGEN). Mg(2+) is bound at residue Glu383.

Belongs to the acetokinase family. As to quaternary structure, homodimer. The cofactor is Mg(2+). Requires Mn(2+) as cofactor.

The protein localises to the cytoplasm. The enzyme catalyses acetate + ATP = acetyl phosphate + ADP. It functions in the pathway metabolic intermediate biosynthesis; acetyl-CoA biosynthesis; acetyl-CoA from acetate: step 1/2. Functionally, catalyzes the formation of acetyl phosphate from acetate and ATP. Can also catalyze the reverse reaction. The sequence is that of Acetate kinase from Streptococcus equi subsp. zooepidemicus (strain MGCS10565).